A 352-amino-acid polypeptide reads, in one-letter code: Peptide chain release factor 1 (352 aa).

Residue Gln230 is modified to N5-methylglutamine.

The protein belongs to the prokaryotic/mitochondrial release factor family. In terms of processing, methylated by PrmC. Methylation increases the termination efficiency of RF1.

The protein resides in the cytoplasm. In terms of biological role, peptide chain release factor 1 directs the termination of translation in response to the peptide chain termination codons UAG and UAA. The chain is Peptide chain release factor 1 from Exiguobacterium sibiricum (strain DSM 17290 / CCUG 55495 / CIP 109462 / JCM 13490 / 255-15).